Here is a 738-residue protein sequence, read N- to C-terminus: Polyribonucleotide nucleotidyltransferase (738 aa).

Mg(2+) contacts are provided by aspartate 528 and aspartate 534. The KH domain maps to 594-653 (PRVVRVKIPVQKIGELIGPKGKVINSIQDETGAEISIEDDGTVYIGSSQADSSEKAVAMV). The region spanning 665-737 (GSQFLGTVVK…DRGKLCLVAV (73 aa)) is the S1 motif domain.

Belongs to the polyribonucleotide nucleotidyltransferase family. Mg(2+) serves as cofactor.

It localises to the cytoplasm. It carries out the reaction RNA(n+1) + phosphate = RNA(n) + a ribonucleoside 5'-diphosphate. In terms of biological role, involved in mRNA degradation. Catalyzes the phosphorolysis of single-stranded polyribonucleotides processively in the 3'- to 5'-direction. This is Polyribonucleotide nucleotidyltransferase from Tropheryma whipplei (strain Twist) (Whipple's bacillus).